Consider the following 48-residue polypeptide: Large ribosomal subunit protein eL40 (48 aa).

It belongs to the eukaryotic ribosomal protein eL40 family.

This chain is Large ribosomal subunit protein eL40, found in Methanoregula boonei (strain DSM 21154 / JCM 14090 / 6A8).